The following is a 905-amino-acid chain: MSEYNQNSNNDTFLSRVFGLHSVYNQLQDEYQYYDPDVDYQQSFMNGGVLSSHVREEGNENTNNDNTNLLDSESDSDSSSSLSSPPSPIVSFTGKEHNQNEDSTKVHWDTTRPHYGQDNDITTSIPKDPPKKNMVNTAKNFINKLHPATDSLPMYNQPQQFRKPPPEGPSVQTVYQKKQHKSKRKYVIPPKERALYLWANITNMDEFLTDVYYYYRGNGMLNIVLTRLVDLLILAFILSFTVFLKWGINYDFFMSSSSDRASVTLKDLVIPNFISEMVPVSVKLLLLGFSGYIVLRLVQLYFDYNYKLKEIKNFYHYLIGIPNDDELMTISWIVIVERLMALKDYNSLTSTNTNLPAQFLSDLNSKVRLNAHDIANRIMRKENYIIALINKEVLDLSLSIPFLSNVNSFLSNKSVLTKTLDWNIKLCINNFIFNQHGQINSHVLKDFNRNQLSKELSARFKMAAIINLLLCPFIVIYFVLLYFFRYFNEYKSNPSSILGLRQYTPWAEWKLREFNELPHFFIKRLHLSIGPANIYINQFPRGFWVINLMNFVNFVSGAITAILVLMGLWFDNEEHNFWSFEITENKSSLFYISLFGTVWAITSSSLTSTNSNTSENLNSQTSSFFYDPEASLRYVSQFTHYLPSSWNGRLHTVQVKNEFCELFSMKIIIIINEILSLILTPFILWFKVSNSSGAIIDFFREYSIHVDGLGYVCYFAMFNFEQKDKNMMMSLNKSKKRKPRKSRANAKKKASSKSKSRSDEIELDNVNSNKADKSKLSDSETSSNSDDNDDTDINNDYYQDDKMIKSYMYFLETCGNDKAKQASKLTSNEQLSTKPSRIAKPDNSQSVVGDPTPSFLYQPLTSNSIDDSSYNINYNIDEQEEESSKGKRSGVLGMINQFYKHDRNR.

At 1-227 (MSEYNQNSNN…NGMLNIVLTR (227 aa)) the chain is on the cytoplasmic side. Positions 55 to 132 (REEGNENTNN…TSIPKDPPKK (78 aa)) are disordered. A compositionally biased stretch (low complexity) spans 60 to 84 (ENTNNDNTNLLDSESDSDSSSSLSS). The span at 94–117 (GKEHNQNEDSTKVHWDTTRPHYGQ) shows a compositional bias: basic and acidic residues. A helical transmembrane segment spans residues 228 to 248 (LVDLLILAFILSFTVFLKWGI). Topologically, residues 249-272 (NYDFFMSSSSDRASVTLKDLVIPN) are lumenal. The chain crosses the membrane as a helical span at residues 273–293 (FISEMVPVSVKLLLLGFSGYI). Topologically, residues 294–463 (VLRLVQLYFD…KELSARFKMA (170 aa)) are cytoplasmic. The stretch at 464 to 484 (AIINLLLCPFIVIYFVLLYFF) is an intramembrane region. Over 485–549 (RYFNEYKSNP…PRGFWVINLM (65 aa)) the chain is Cytoplasmic. A helical membrane pass occupies residues 550–570 (NFVNFVSGAITAILVLMGLWF). Topologically, residues 571–588 (DNEEHNFWSFEITENKSS) are lumenal. The helical transmembrane segment at 589–609 (LFYISLFGTVWAITSSSLTST) threads the bilayer. Over 610-665 (NSNTSENLNSQTSSFFYDPEASLRYVSQFTHYLPSSWNGRLHTVQVKNEFCELFSM) the chain is Cytoplasmic. An intramembrane segment occupies 666–686 (KIIIIINEILSLILTPFILWF). The Cytoplasmic portion of the chain corresponds to 687-905 (KVSNSSGAII…NQFYKHDRNR (219 aa)). Disordered regions lie at residues 731-795 (LNKS…DINN) and 821-851 (QASK…VGDP). A compositionally biased stretch (basic residues) spans 733 to 755 (KSKKRKPRKSRANAKKKASSKSK). Over residues 823–835 (SKLTSNEQLSTKP) the composition is skewed to polar residues.

Belongs to the ATG9 family. As to quaternary structure, homotrimer; forms a homotrimer with a central pore that forms a path between the two membrane leaflets. Post-translationally, phosphorylated by ATG1. ATG1 phosphorylation is required for preautophagosome elongation.

It localises to the preautophagosomal structure membrane. Its subcellular location is the cytoplasmic vesicle membrane. It is found in the golgi apparatus membrane. The protein resides in the endoplasmic reticulum membrane. It carries out the reaction a 1,2-diacyl-sn-glycero-3-phosphocholine(in) = a 1,2-diacyl-sn-glycero-3-phosphocholine(out). The enzyme catalyses a 1,2-diacyl-sn-glycero-3-phospho-L-serine(in) = a 1,2-diacyl-sn-glycero-3-phospho-L-serine(out). The catalysed reaction is a 1,2-diacyl-sn-glycero-3-phosphoethanolamine(in) = a 1,2-diacyl-sn-glycero-3-phosphoethanolamine(out). It catalyses the reaction a 1,2-diacyl-sn-glycero-3-phospho-(1D-myo-inositol-3-phosphate)(in) = a 1,2-diacyl-sn-glycero-3-phospho-(1D-myo-inositol-3-phosphate)(out). Its function is as follows. Phospholipid scramblase involved in autophagy and cytoplasm to vacuole transport (Cvt) vesicle formation. Cycles between the preautophagosomal structure/phagophore assembly site (PAS) and the cytoplasmic vesicle pool and supplies membrane for the growing autophagosome. Lipid scramblase activity plays a key role in preautophagosomal structure/phagophore assembly by distributing the phospholipids that arrive through ATG2 from the cytoplasmic to the luminal leaflet of the bilayer, thereby driving autophagosomal membrane expansion. Required for mitophagy. Also involved in endoplasmic reticulum-specific autophagic process and is essential for the survival of cells subjected to severe ER stress. Different machineries are required for anterograde trafficking to the PAS during either the Cvt pathway or bulk autophagy and for retrograde trafficking. This is Autophagy-related protein 9 (ATG9) from Debaryomyces hansenii (strain ATCC 36239 / CBS 767 / BCRC 21394 / JCM 1990 / NBRC 0083 / IGC 2968) (Yeast).